The chain runs to 121 residues: Small ribosomal subunit protein uS13 (121 aa).

Residues 89-121 (RRHRMSLPVRGQRTRTNARTRRGSRKTVAGRKK) are disordered. The segment covering 100–121 (QRTRTNARTRRGSRKTVAGRKK) has biased composition (basic residues).

The protein belongs to the universal ribosomal protein uS13 family. Part of the 30S ribosomal subunit. Forms a loose heterodimer with protein S19. Forms two bridges to the 50S subunit in the 70S ribosome.

Its function is as follows. Located at the top of the head of the 30S subunit, it contacts several helices of the 16S rRNA. In the 70S ribosome it contacts the 23S rRNA (bridge B1a) and protein L5 of the 50S subunit (bridge B1b), connecting the 2 subunits; these bridges are implicated in subunit movement. Contacts the tRNAs in the A and P-sites. In Prochlorococcus marinus subsp. pastoris (strain CCMP1986 / NIES-2087 / MED4), this protein is Small ribosomal subunit protein uS13.